The chain runs to 427 residues: Glutamate-1-semialdehyde 2,1-aminomutase (427 aa).

N6-(pyridoxal phosphate)lysine is present on lysine 265.

The protein belongs to the class-III pyridoxal-phosphate-dependent aminotransferase family. HemL subfamily. As to quaternary structure, homodimer. It depends on pyridoxal 5'-phosphate as a cofactor.

It localises to the cytoplasm. It catalyses the reaction (S)-4-amino-5-oxopentanoate = 5-aminolevulinate. The protein operates within porphyrin-containing compound metabolism; protoporphyrin-IX biosynthesis; 5-aminolevulinate from L-glutamyl-tRNA(Glu): step 2/2. The chain is Glutamate-1-semialdehyde 2,1-aminomutase from Photorhabdus laumondii subsp. laumondii (strain DSM 15139 / CIP 105565 / TT01) (Photorhabdus luminescens subsp. laumondii).